The chain runs to 1166 residues: Poly [ADP-ribose] polymerase tankyrase-2 (1166 aa).

4 ANK repeats span residues 23–52 (PSARELFEACRNGDVERVKRLVTPEKVNSR), 57–86 (RKSTPLHFAAGFGRKDVVEYLLQNGANVQA), 90–119 (GGLIPLHNACSFGHAEVVNLLLQHGADPNA), and 123–152 (WNYTPLHEAAIKGKIDVCIVLLQHGAEPTI). A (3S)-3-hydroxyasparagine; by HIF1AN modification is found at Asn-203. ANK repeat units lie at residues 210 to 239 (RKSTPLHLAAGYNRVKIVQLLLHHGADVHA), 243 to 272 (GDLVPLHNACSYGHYEVTELLVKHGACVNA), 276 to 305 (WQFTPLHEAASKNRIEVCSLLLSYGADPTL), 363 to 395 (THETALHCAAASPYPKRKQICELLLRKGANTNE), 399 to 428 (EFLTPLHVASENAHNDVVEVVVKHEAKVNA), 432 to 461 (LGQTSLHRAAHCGHLQTCRLLLSYGCDPNI), and 463 to 489 (SLQGFTALQMGNENVQQLLQEGASLGH). His-238 is subject to (3S)-3-hydroxyhistidine; by HIF1AN. Position 271 is a (3S)-3-hydroxyasparagine; by HIF1AN (Asn-271). Asn-427 carries the (3S)-3-hydroxyasparagine; by HIF1AN modification. Asn-518 carries the post-translational modification (3S)-3-hydroxyasparagine; by HIF1AN. 4 ANK repeats span residues 525–554 (RQSTPLHFAAGYNRVSVVEYLLQHGADVHA), 558–587 (GGLVPLHNACSYGHYEVAELLVKHGAVVNV), 591–620 (WKFTPLHEAAAKGKYEICKLLLQHGADPTK), and 624–652 (DGNTPLDLVKDGDTDIQDLLRGDAALLDA). The segment at 545–553 (LLQHGADVH) is HIF1AN-binding. A (3S)-3-hydroxyhistidine; by HIF1AN modification is found at His-553. A (3S)-3-hydroxyasparagine; by HIF1AN modification is found at Asn-586. (3S)-3-hydroxyasparagine; by HIF1AN is present on residues Asn-671, Asn-706, and Asn-739. ANK repeat units follow at residues 678-707 (RHSTPLHLAAGYNNLEVAEYLLQHGADVNA), 711-740 (GGLIPLHNAASYGHVDVAALLIKYNACVNA), and 744-773 (WAFTPLHEAAQKGRTQLCALLLAHGADPTL). Residues 873 to 936 (GIDFSITQFI…IKGVERLISG (64 aa)) enclose the SAM domain. Residues 959–1164 (SPDDKEFQSV…YQIVRPEGMV (206 aa)) form the PARP catalytic domain. Zn(2+)-binding residues include Cys-1081, His-1084, Cys-1089, and Cys-1092.

Belongs to the ARTD/PARP family. Oligomerizes and associates with TNKS. Interacts with the cytoplasmic domain of LNPEP/Otase in SLC2A4/GLUT4-vesicles. Binds to the N-terminus of Grb14 and TRF1 with its ankyrin repeat region. Interacts with HIF1AN. Interacts with RNF146; this interaction leads to ubiquitination and proteasomal degradation. Interacts with NUMA1. In terms of processing, ubiquitinated by RNF146 when auto-poly-ADP-ribosylated, leading to its degradation. Deubiquitinated by USP25; leading to stabilization. ADP-ribosylated (-auto). Poly-ADP-ribosylated protein is recognized by RNF146, followed by ubiquitination.

The protein localises to the cytoplasm. It is found in the golgi apparatus membrane. It localises to the nucleus. The protein resides in the chromosome. Its subcellular location is the telomere. It carries out the reaction NAD(+) + (ADP-D-ribosyl)n-acceptor = nicotinamide + (ADP-D-ribosyl)n+1-acceptor + H(+).. The catalysed reaction is L-aspartyl-[protein] + NAD(+) = 4-O-(ADP-D-ribosyl)-L-aspartyl-[protein] + nicotinamide. The enzyme catalyses L-glutamyl-[protein] + NAD(+) = 5-O-(ADP-D-ribosyl)-L-glutamyl-[protein] + nicotinamide. Poly-ADP-ribosyltransferase involved in various processes such as Wnt signaling pathway, telomere length and vesicle trafficking. Acts as an activator of the Wnt signaling pathway by mediating poly-ADP-ribosylation of AXIN1 and AXIN2, 2 key components of the beta-catenin destruction complex: poly-ADP-ribosylated target proteins are recognized by RNF146, which mediates their ubiquitination and subsequent degradation. Also mediates poly-ADP-ribosylation of BLZF1 and CASC3, followed by recruitment of RNF146 and subsequent ubiquitination. Mediates poly-ADP-ribosylation of TERF1, thereby contributing to the regulation of telomere length. Stimulates 26S proteasome activity. The protein is Poly [ADP-ribose] polymerase tankyrase-2 of Mus musculus (Mouse).